The primary structure comprises 194 residues: Holliday junction branch migration complex subunit RuvA (194 aa).

Residues 1 to 64 (MISRLTGKLV…EDAHLLFGFA (64 aa)) are domain I. The tract at residues 65 to 143 (TAEERKTFRQ…AHTVTDGLFA (79 aa)) is domain II. Residues 144–147 (AAPA) form a flexible linker region. The domain III stretch occupies residues 147-194 (AADETEDIVSTLLALGYSEREAKAAVKGVPEGTDVGEGVRLALKNLLK).

Belongs to the RuvA family. As to quaternary structure, homotetramer. Forms an RuvA(8)-RuvB(12)-Holliday junction (HJ) complex. HJ DNA is sandwiched between 2 RuvA tetramers; dsDNA enters through RuvA and exits via RuvB. An RuvB hexamer assembles on each DNA strand where it exits the tetramer. Each RuvB hexamer is contacted by two RuvA subunits (via domain III) on 2 adjacent RuvB subunits; this complex drives branch migration. In the full resolvosome a probable DNA-RuvA(4)-RuvB(12)-RuvC(2) complex forms which resolves the HJ.

Its subcellular location is the cytoplasm. Its function is as follows. The RuvA-RuvB-RuvC complex processes Holliday junction (HJ) DNA during genetic recombination and DNA repair, while the RuvA-RuvB complex plays an important role in the rescue of blocked DNA replication forks via replication fork reversal (RFR). RuvA specifically binds to HJ cruciform DNA, conferring on it an open structure. The RuvB hexamer acts as an ATP-dependent pump, pulling dsDNA into and through the RuvAB complex. HJ branch migration allows RuvC to scan DNA until it finds its consensus sequence, where it cleaves and resolves the cruciform DNA. The polypeptide is Holliday junction branch migration complex subunit RuvA (Neisseria meningitidis serogroup B (strain ATCC BAA-335 / MC58)).